The chain runs to 448 residues: Phosphoglucosamine mutase (448 aa).

Catalysis depends on S101, which acts as the Phosphoserine intermediate. Residues S101, D241, D243, and D245 each coordinate Mg(2+). Phosphoserine is present on S101.

It belongs to the phosphohexose mutase family. Mg(2+) is required as a cofactor. Activated by phosphorylation.

The enzyme catalyses alpha-D-glucosamine 1-phosphate = D-glucosamine 6-phosphate. In terms of biological role, catalyzes the conversion of glucosamine-6-phosphate to glucosamine-1-phosphate. The sequence is that of Phosphoglucosamine mutase from Macrococcus caseolyticus (strain JCSC5402) (Macrococcoides caseolyticum).